The primary structure comprises 356 residues: Holliday junction branch migration complex subunit RuvB (356 aa).

The segment at 4–190 (TDKLAAERII…FGIVARLEFY (187 aa)) is large ATPase domain (RuvB-L). ATP-binding positions include L29, R30, G71, K74, T75, T76, 137 to 139 (EDY), R180, Y190, and R227. T75 provides a ligand contact to Mg(2+). Residues 191-261 (DAEQLSRIVR…VADAALAMLD (71 aa)) form a small ATPAse domain (RuvB-S) region. The tract at residues 264 to 356 (PVGFDLMDRK…NLWDTPDAEC (93 aa)) is head domain (RuvB-H). DNA is bound by residues R300, R319, and R324.

It belongs to the RuvB family. Homohexamer. Forms an RuvA(8)-RuvB(12)-Holliday junction (HJ) complex. HJ DNA is sandwiched between 2 RuvA tetramers; dsDNA enters through RuvA and exits via RuvB. An RuvB hexamer assembles on each DNA strand where it exits the tetramer. Each RuvB hexamer is contacted by two RuvA subunits (via domain III) on 2 adjacent RuvB subunits; this complex drives branch migration. In the full resolvosome a probable DNA-RuvA(4)-RuvB(12)-RuvC(2) complex forms which resolves the HJ.

The protein resides in the cytoplasm. The enzyme catalyses ATP + H2O = ADP + phosphate + H(+). The RuvA-RuvB-RuvC complex processes Holliday junction (HJ) DNA during genetic recombination and DNA repair, while the RuvA-RuvB complex plays an important role in the rescue of blocked DNA replication forks via replication fork reversal (RFR). RuvA specifically binds to HJ cruciform DNA, conferring on it an open structure. The RuvB hexamer acts as an ATP-dependent pump, pulling dsDNA into and through the RuvAB complex. RuvB forms 2 homohexamers on either side of HJ DNA bound by 1 or 2 RuvA tetramers; 4 subunits per hexamer contact DNA at a time. Coordinated motions by a converter formed by DNA-disengaged RuvB subunits stimulates ATP hydrolysis and nucleotide exchange. Immobilization of the converter enables RuvB to convert the ATP-contained energy into a lever motion, pulling 2 nucleotides of DNA out of the RuvA tetramer per ATP hydrolyzed, thus driving DNA branch migration. The RuvB motors rotate together with the DNA substrate, which together with the progressing nucleotide cycle form the mechanistic basis for DNA recombination by continuous HJ branch migration. Branch migration allows RuvC to scan DNA until it finds its consensus sequence, where it cleaves and resolves cruciform DNA. This chain is Holliday junction branch migration complex subunit RuvB, found in Burkholderia pseudomallei (strain 668).